Consider the following 626-residue polypeptide: Chaperone protein HtpG (626 aa).

Residues 1–329 (MSEETLSFQA…SSDLPLNVSR (329 aa)) are a; substrate-binding. Residues 330-549 (EMLQDDPRLR…EGAMSLHLQK (220 aa)) form a b region. A c region spans residues 550-626 (LLRQANQGSE…LTEVMGKGLI (77 aa)).

Belongs to the heat shock protein 90 family. As to quaternary structure, homodimer.

The protein localises to the cytoplasm. Functionally, molecular chaperone. Has ATPase activity. The polypeptide is Chaperone protein HtpG (Rhodospirillum rubrum (strain ATCC 11170 / ATH 1.1.1 / DSM 467 / LMG 4362 / NCIMB 8255 / S1)).